We begin with the raw amino-acid sequence, 65 residues long: uncharacterized protein (65 aa).

This is an uncharacterized protein from Mycobacterium tuberculosis (strain ATCC 25618 / H37Rv).